A 284-amino-acid polypeptide reads, in one-letter code: Release factor glutamine methyltransferase (284 aa).

S-adenosyl-L-methionine-binding positions include 125–129 (GVGSG), glutamate 148, and asparagine 190. Position 190 to 193 (190 to 193 (NPPY)) interacts with substrate.

The protein belongs to the protein N5-glutamine methyltransferase family. PrmC subfamily.

It carries out the reaction L-glutaminyl-[peptide chain release factor] + S-adenosyl-L-methionine = N(5)-methyl-L-glutaminyl-[peptide chain release factor] + S-adenosyl-L-homocysteine + H(+). In terms of biological role, methylates the class 1 translation termination release factors RF1/PrfA and RF2/PrfB on the glutamine residue of the universally conserved GGQ motif. The polypeptide is Release factor glutamine methyltransferase (Geobacter sulfurreducens (strain ATCC 51573 / DSM 12127 / PCA)).